The following is a 341-amino-acid chain: Glycerol-3-phosphate dehydrogenase [NAD(P)+] (341 aa).

Residues serine 12, tryptophan 13, arginine 33, and lysine 107 each coordinate NADPH. Positions 107, 134, and 136 each coordinate sn-glycerol 3-phosphate. Alanine 138 provides a ligand contact to NADPH. 5 residues coordinate sn-glycerol 3-phosphate: lysine 189, aspartate 242, serine 252, arginine 253, and asparagine 254. The Proton acceptor role is filled by lysine 189. Residue arginine 253 coordinates NADPH. The NADPH site is built by valine 277 and glutamate 279.

Belongs to the NAD-dependent glycerol-3-phosphate dehydrogenase family.

It localises to the cytoplasm. It carries out the reaction sn-glycerol 3-phosphate + NAD(+) = dihydroxyacetone phosphate + NADH + H(+). The catalysed reaction is sn-glycerol 3-phosphate + NADP(+) = dihydroxyacetone phosphate + NADPH + H(+). The protein operates within membrane lipid metabolism; glycerophospholipid metabolism. Functionally, catalyzes the reduction of the glycolytic intermediate dihydroxyacetone phosphate (DHAP) to sn-glycerol 3-phosphate (G3P), the key precursor for phospholipid synthesis. This Halothermothrix orenii (strain H 168 / OCM 544 / DSM 9562) protein is Glycerol-3-phosphate dehydrogenase [NAD(P)+].